A 1473-amino-acid chain; its full sequence is Collagen alpha-1(XVII) chain (1473 aa).

Positions 1–19 (MDITQKNKRDGTEVTERII) are enriched in basic and acidic residues. 2 disordered regions span residues 1–155 (MDIT…PSTR) and 168–188 (GSRS…PIPK). Over 1–474 (MDITQKNKRD…CGSWCSWWKW (474 aa)) the chain is Cytoplasmic. The segment at 1–572 (MDITQKNKRD…MTEQENGNLR (572 aa)) is nonhelical region (NC16). 3 stretches are compositionally biased toward polar residues: residues 57-96 (LTHG…SPGS), 111-120 (EGSSSGNSSP), and 170-184 (RSAS…SNTL). The segment at 146-231 (RLQSASPSTR…WSSTLPAGSS (86 aa)) is necessary for interaction with DST and for the recruitment of DST to hemidesmosome. Residues 475–495 (LLGLLLTWLLLLGLLFGLIAL) traverse the membrane as a helical; Signal-anchor for type II membrane protein segment. Topologically, residues 496-1473 (AEEVRKLKAR…RRRRSIAVKP (978 aa)) are extracellular. Disordered stretches follow at residues 567-1017 (ENGN…LSSS), 1173-1234 (FRGI…ISGA), and 1261-1308 (SFIV…SSMG). A triple-helical region region spans residues 573 to 1459 (GSPGPKGDMG…KGEKGDKGDQ (887 aa)). Low complexity-rich tracts occupy residues 619–638 (EPGM…MGPR), 667–678 (PGSVGPKGSIGP), 729–742 (EPGA…AGPD), and 769–790 (PGKP…PGRP). The segment covering 814-835 (PGPPGPPGAMGPPGPPGAPGPV) has biased composition (pro residues). 2 stretches are compositionally biased toward low complexity: residues 837-847 (PAGLPGQQGPR) and 854-866 (GESF…SFSE). Pro residues-rich tracts occupy residues 878 to 899 (PPGP…PGPP) and 913 to 922 (PPGPPGPPGP). Residues 940–957 (FPGLSGSGSSSLGLNLQG) show a composition bias toward low complexity. 2 stretches are compositionally biased toward pro residues: residues 1001–1011 (PPGPPGPPGPP) and 1179–1188 (PPGPPGPPGL). Polar residues predominate over residues 1198–1210 (TEDLSSYLQTAGL). Pro residues-rich tracts occupy residues 1214–1228 (PGPP…PRGP) and 1266–1275 (PPGPPGPQGP). Over residues 1283–1307 (STDSSYSRSGSSSSFSRDTSYSSSM) the composition is skewed to low complexity. Asn1404 is a glycosylation site (N-linked (GlcNAc...) asparagine). Positions 1417–1473 (GAIPGPPGQKGEMGIPGPKGERGPAGPPGPRGHKGEKGDKGDQFYIGRRRRSIAVKP) are disordered. Residues 1449 to 1458 (HKGEKGDKGD) are compositionally biased toward basic and acidic residues. The segment at 1460-1473 (FYIGRRRRSIAVKP) is nonhelical region (NC1). The span at 1463–1473 (GRRRRSIAVKP) shows a compositional bias: basic residues.

In terms of assembly, homotrimers of alpha 1(XVII)chains. Interacts (via cytoplasmic region) with ITGB4 (via cytoplasmic region). Interacts (via cytoplasmic region) with DST (via N-terminus). Interacts (via N-terminus) with PLEC. Interacts (via cytoplasmic region) with DSP. In terms of processing, the intracellular/endo domain is disulfide-linked. Post-translationally, prolines at the third position of the tripeptide repeating unit (G-X-Y) are hydroxylated in some or all of the chains. The ectodomain is shedded from the surface of keratinocytes resulting in a 120-kDa soluble form, also named as 120 kDa linear IgA disease antigen homolog. The shedding is mediated by membrane-bound metalloproteases.

It is found in the cell junction. The protein resides in the hemidesmosome. It localises to the membrane. Its subcellular location is the secreted. The protein localises to the extracellular space. It is found in the extracellular matrix. The protein resides in the basement membrane. Functionally, may play a role in the integrity of hemidesmosome and the attachment of basal keratinocytes to the underlying basement membrane. The 120 kDa linear IgA disease antigen homolog is an anchoring filament component involved in dermal-epidermal cohesion. The protein is Collagen alpha-1(XVII) chain (COL17A1) of Bos taurus (Bovine).